A 260-amino-acid chain; its full sequence is 3-methyl-2-oxobutanoate hydroxymethyltransferase (260 aa).

Residues Asp-44 and Asp-83 each contribute to the Mg(2+) site. 3-methyl-2-oxobutanoate contacts are provided by residues Asp-44 to Ser-45, Asp-83, and Lys-113. Glu-115 lines the Mg(2+) pocket. Glu-182 (proton acceptor) is an active-site residue.

Belongs to the PanB family. As to quaternary structure, homodecamer; pentamer of dimers. Requires Mg(2+) as cofactor.

The protein resides in the cytoplasm. The enzyme catalyses 3-methyl-2-oxobutanoate + (6R)-5,10-methylene-5,6,7,8-tetrahydrofolate + H2O = 2-dehydropantoate + (6S)-5,6,7,8-tetrahydrofolate. Its pathway is cofactor biosynthesis; (R)-pantothenate biosynthesis; (R)-pantoate from 3-methyl-2-oxobutanoate: step 1/2. Functionally, catalyzes the reversible reaction in which hydroxymethyl group from 5,10-methylenetetrahydrofolate is transferred onto alpha-ketoisovalerate to form ketopantoate. This chain is 3-methyl-2-oxobutanoate hydroxymethyltransferase, found in Synechocystis sp. (strain ATCC 27184 / PCC 6803 / Kazusa).